Consider the following 846-residue polypeptide: DNA mismatch repair protein MutS (846 aa).

610–617 (GPNMGGKS) lines the ATP pocket.

This sequence belongs to the DNA mismatch repair MutS family.

Its function is as follows. This protein is involved in the repair of mismatches in DNA. It is possible that it carries out the mismatch recognition step. This protein has a weak ATPase activity. This chain is DNA mismatch repair protein MutS, found in Legionella pneumophila (strain Lens).